A 65-amino-acid polypeptide reads, in one-letter code: Small ribosomal subunit protein bS21B (65 aa).

This sequence belongs to the bacterial ribosomal protein bS21 family.

In Francisella tularensis subsp. holarctica (strain LVS), this protein is Small ribosomal subunit protein bS21B.